Consider the following 485-residue polypeptide: E3 ubiquitin-protein ligase TRIM58 (485 aa).

The RING-type zinc finger occupies 15 to 59; sequence CSVCLDFLQEPISVDCGHSFCLRCISEFCEKSDSAQGVYACPQCR. The B box-type zinc-finger motif lies at 90–131; that stretch reads AGSRQCARHGEDLSHFCEEDQTMLCWVCDTSPEHRSHRTETL. Residues C95, H98, C117, and H123 each coordinate Zn(2+). Residues 192–241 adopt a coiled-coil conformation; sequence LAQEEQLQLRRLEEEERATLQRLRDSRNRLAQQNKALKELAEELEERSQR. The B30.2/SPRY domain maps to 271 to 466; that stretch reads DLKTVCRIPG…LPPMTEAAPG (196 aa).

This sequence belongs to the TRIM/RBCC family. Expressed in erythroblasts.

It carries out the reaction S-ubiquitinyl-[E2 ubiquitin-conjugating enzyme]-L-cysteine + [acceptor protein]-L-lysine = [E2 ubiquitin-conjugating enzyme]-L-cysteine + N(6)-ubiquitinyl-[acceptor protein]-L-lysine.. Its pathway is protein modification; protein ubiquitination. Functionally, E3 ubiquitin ligase induced during late erythropoiesis. Directly binds and ubiquitinates the intermediate chain of the microtubule motor dynein (DYNC1LI1/DYNC1LI2), stimulating the degradation of the dynein holoprotein complex. May participate in the erythroblast enucleation process through regulation of nuclear polarization. This is E3 ubiquitin-protein ligase TRIM58 (Trim58) from Mus musculus (Mouse).